Reading from the N-terminus, the 611-residue chain is Zinc metalloproteinase nas-31 (611 aa).

A signal peptide spans 1–17; the sequence is MILQLLFYSLFTHLAVS. Residues 18-158 constitute a propeptide that is removed on maturation; sequence QIDVNQALNQ…TVSTASRARR (141 aa). N-linked (GlcNAc...) asparagine glycosylation is found at asparagine 53 and asparagine 67. Residues 82-95 show a composition bias toward polar residues; it reads NAGTNQENGATEQQ. Positions 82–103 are disordered; it reads NAGTNQENGATEQQKPLREKPR. The region spanning 159–354 is the Peptidase M12A domain; the sequence is QAYRDRYYPS…SMMNEHYKCK (196 aa). An N-linked (GlcNAc...) asparagine glycan is attached at asparagine 200. Disulfide bonds link cysteine 203/cysteine 353, cysteine 224/cysteine 243, cysteine 357/cysteine 376, cysteine 379/cysteine 390, cysteine 397/cysteine 428, cysteine 455/cysteine 476, cysteine 532/cysteine 564, cysteine 539/cysteine 557, and cysteine 548/cysteine 561. Histidine 251 is a Zn(2+) binding site. Residue glutamate 252 is part of the active site. Histidine 255 and histidine 261 together coordinate Zn(2+). Residues 340 to 396 enclose the EGF-like domain; the sequence is GFYDISMMNEHYKCKELCPAASSAQCKNGGFPSPRNCAICICPSGYGGILCDQRPPG. Residues 397 to 516 enclose the CUB domain; sequence CGDSVTATTT…LEYRAVTPSV (120 aa). A glycan (N-linked (GlcNAc...) asparagine) is linked at asparagine 424. The region spanning 532 to 564 is the ShKT domain; the sequence is CQDLHPNCDFYKFFGMCRSKKIRSNCKFTCHDC.

Zn(2+) serves as cofactor. In terms of tissue distribution, expressed in excretory cell and in amphid and phasmid sheath glia.

It localises to the secreted. Its function is as follows. Metalloprotease. The sequence is that of Zinc metalloproteinase nas-31 (nas-31) from Caenorhabditis elegans.